The sequence spans 399 residues: Digeranylgeranylglycerophospholipid reductase (399 aa).

Residues Gly15, Glu34, Cys45, Ala46, Gly48, Arg99, Ala123, Asp280, Gly292, and Ile293 each contribute to the FAD site.

Belongs to the geranylgeranyl reductase family. DGGGPL reductase subfamily. FAD serves as cofactor.

The catalysed reaction is a 2,3-bis-O-phytanyl-sn-glycerol 1-phospholipid + 8 oxidized 2[4Fe-4S]-[ferredoxin] = a 2,3-bis-O-(geranylgeranyl)-sn-glycerol 1-phospholipid + 8 reduced 2[4Fe-4S]-[ferredoxin] + 16 H(+). It catalyses the reaction 2,3-bis-O-(phytanyl)-sn-glycerol 1-phosphate + 8 oxidized 2[4Fe-4S]-[ferredoxin] = 2,3-bis-O-(geranylgeranyl)-sn-glycerol 1-phosphate + 8 reduced 2[4Fe-4S]-[ferredoxin] + 16 H(+). It carries out the reaction a 2,3-bis-O-phytanyl-sn-glycerol 1-phospholipid + 8 A = a 2,3-bis-O-(geranylgeranyl)-sn-glycerol 1-phospholipid + 8 AH2. The enzyme catalyses CDP-2,3-bis-O-(geranylgeranyl)-sn-glycerol + 8 AH2 = CDP-2,3-bis-O-(phytanyl)-sn-glycerol + 8 A. The catalysed reaction is archaetidylserine + 8 AH2 = 2,3-bis-O-phytanyl-sn-glycero-3-phospho-L-serine + 8 A. It functions in the pathway membrane lipid metabolism; glycerophospholipid metabolism. In terms of biological role, is involved in the reduction of 2,3-digeranylgeranylglycerophospholipids (unsaturated archaeols) into 2,3-diphytanylglycerophospholipids (saturated archaeols) in the biosynthesis of archaeal membrane lipids. Catalyzes the formation of archaetidic acid (2,3-di-O-phytanyl-sn-glyceryl phosphate) from 2,3-di-O-geranylgeranylglyceryl phosphate (DGGGP) via the hydrogenation of each double bond of the isoprenoid chains. Is also probably able to reduce double bonds of geranyl groups in CDP-2,3-bis-O-(geranylgeranyl)-sn-glycerol and archaetidylserine, thus acting at various stages in the biosynthesis of archaeal membrane lipids. This chain is Digeranylgeranylglycerophospholipid reductase, found in Methanosphaerula palustris (strain ATCC BAA-1556 / DSM 19958 / E1-9c).